The sequence spans 227 residues: (S)-2-haloacid dehalogenase (227 aa).

Catalysis depends on D10, which acts as the Nucleophile. An (S)-2-haloacid-binding positions include 11 to 12 (LY), R41, and 118 to 119 (SN). The interval 175–180 (SSNAWD) is important for catalytic activity.

Belongs to the HAD-like hydrolase superfamily. S-2-haloalkanoic acid dehalogenase family. In terms of assembly, homotetramer.

The enzyme catalyses an (S)-2-haloacid + H2O = a (2R)-2-hydroxycarboxylate + a halide anion + H(+). The catalysed reaction is (S)-2-chloropropanoate + H2O = (R)-lactate + chloride + H(+). Catalyzes the hydrolytic dehalogenation of small (S)-2-haloalkanoic acids to yield the corresponding (R)-2-hydroxyalkanoic acids. Acts on acids of short chain lengths, C(2) to C(4), with inversion of configuration at C-2. Active with 2-halogenated carboxylic acids and converts only the S-isomer (or L-isomer) of 2-chloropropionic acid with inversion of configuration to produce R-lactate (or D-isomer). The sequence is that of (S)-2-haloacid dehalogenase from Pseudomonas putida (Arthrobacter siderocapsulatus).